Consider the following 304-residue polypeptide: Non-specific ribonucleoside hydrolase RihC (304 aa).

The active site involves H233.

Belongs to the IUNH family. RihC subfamily.

In terms of biological role, hydrolyzes both purine and pyrimidine ribonucleosides with a broad-substrate specificity. The protein is Non-specific ribonucleoside hydrolase RihC of Escherichia coli (strain SE11).